The chain runs to 448 residues: Ribosomal protein uS12 methylthiotransferase RimO (448 aa).

In terms of domain architecture, MTTase N-terminal spans 16-126; the sequence is PKISFVSLGC…VVAAVHEAVP (111 aa). [4Fe-4S] cluster contacts are provided by Cys-25, Cys-61, Cys-90, Cys-157, Cys-161, and Cys-164. Positions 143–380 constitute a Radical SAM core domain; it reads LTPRHYAYLK…METQNGIALR (238 aa). The 66-residue stretch at 383–448 folds into the TRAM domain; it reads RAKVGKRLPV…EAYDLYGSVA (66 aa).

This sequence belongs to the methylthiotransferase family. RimO subfamily. Requires [4Fe-4S] cluster as cofactor.

It is found in the cytoplasm. It catalyses the reaction L-aspartate(89)-[ribosomal protein uS12]-hydrogen + (sulfur carrier)-SH + AH2 + 2 S-adenosyl-L-methionine = 3-methylsulfanyl-L-aspartate(89)-[ribosomal protein uS12]-hydrogen + (sulfur carrier)-H + 5'-deoxyadenosine + L-methionine + A + S-adenosyl-L-homocysteine + 2 H(+). Catalyzes the methylthiolation of an aspartic acid residue of ribosomal protein uS12. The polypeptide is Ribosomal protein uS12 methylthiotransferase RimO (Methylobacterium radiotolerans (strain ATCC 27329 / DSM 1819 / JCM 2831 / NBRC 15690 / NCIMB 10815 / 0-1)).